We begin with the raw amino-acid sequence, 120 residues long: uncharacterized protein (120 aa).

The protein to the N-terminal region of phage HK97/HK620 Gp37/hpaH.

This is an uncharacterized protein from Escherichia coli (strain K12).